The primary structure comprises 469 residues: ATP-dependent protease ATPase subunit HslU (469 aa).

ATP is bound by residues Ile24, 66–71 (GVGKTE), Asp282, Glu347, and Arg419.

This sequence belongs to the ClpX chaperone family. HslU subfamily. In terms of assembly, a double ring-shaped homohexamer of HslV is capped on each side by a ring-shaped HslU homohexamer. The assembly of the HslU/HslV complex is dependent on binding of ATP.

The protein localises to the cytoplasm. Its function is as follows. ATPase subunit of a proteasome-like degradation complex; this subunit has chaperone activity. The binding of ATP and its subsequent hydrolysis by HslU are essential for unfolding of protein substrates subsequently hydrolyzed by HslV. HslU recognizes the N-terminal part of its protein substrates and unfolds these before they are guided to HslV for hydrolysis. The sequence is that of ATP-dependent protease ATPase subunit HslU from Listeria monocytogenes serotype 4a (strain HCC23).